The primary structure comprises 601 residues: Deuterosome assembly protein 1 (601 aa).

3 coiled-coil regions span residues 14-59, 86-197, and 226-278; these read CEAE…NAQT, TQNY…KQQR, and IEKL…LQSR. Disordered stretches follow at residues 115–135 and 188–213; these read MKQN…PFEL and QTQL…CESS. Positions 121-131 are enriched in basic and acidic residues; the sequence is HRKEASNKDET. Positions 307 to 326 are disordered; it reads DNRKRVESSYSPSTKEPERK. Positions 340-397 form a coiled coil; that stretch reads HEKELNKMRSQLYQEEDLCSEQERMRNEISELTQELHQKEVTIATIMKKAALLERQLK. Ser-544 carries the phosphoserine modification. Residues 555–586 are a coiled coil; it reads AAQHFLMEEEKRAKELEKLLNTHIDELQRHTE.

The protein belongs to the CEP63 family. In terms of assembly, interacts with CEP152; the interaction is mutually exclusive with CEP63.

It localises to the cytoplasm. Key structural component of the deuterosome, a structure that promotes de novo centriole amplification in multiciliated cells. Deuterosome-mediated centriole amplification occurs in terminally differentiated multiciliated cells and can generate more than 100 centrioles. Probably sufficient for the specification and formation of the deuterosome inner core. Interacts with CEP152 and recruits PLK4 to activate centriole biogenesis. The polypeptide is Deuterosome assembly protein 1 (Rattus norvegicus (Rat)).